We begin with the raw amino-acid sequence, 234 residues long: UPF0758 protein Smal_0281 (234 aa).

One can recognise an MPN domain in the interval 103-225; it reads VGNNPAAVGR…PVSFAERGLL (123 aa). Residues His-174, His-176, and Asp-187 each coordinate Zn(2+). A JAMM motif motif is present at residues 174-187; it reads HNHPSGDPEPSSAD.

It belongs to the UPF0758 family.

The protein is UPF0758 protein Smal_0281 of Stenotrophomonas maltophilia (strain R551-3).